The chain runs to 377 residues: Probable multidrug ABC transporter permease YbhS (377 aa).

Residues 1 to 28 (MSNPILSWRRVRALCVKETRQIVRDPSS) are Cytoplasmic-facing. The helical transmembrane segment at 29–49 (WLIAVVIPLLLLFIFGYGINL) threads the bilayer. Over 50–181 (DSSKLRVGIL…WFNPAAISQH (132 aa)) the chain is Periplasmic. Positions 145–375 (IWQIWQMQRA…GLTWLKTKRR (231 aa)) constitute an ABC transmembrane type-2 domain. Residues 182 to 202 (FIIPGAVTIIMTVIGAILTSL) traverse the membrane as a helical segment. At 203 to 234 (VVAREWERGTMEALLSTEITRTELLLCKLIPY) the chain is on the cytoplasmic side. The chain crosses the membrane as a helical span at residues 235 to 255 (YFLGMLAMLLCMLVSVFILGV). Over 256-261 (PYRGSL) the chain is Periplasmic. A helical transmembrane segment spans residues 262-282 (LILFFISSLFLLSTLGMGLLI). Over 283 to 291 (STITRNQFN) the chain is Cytoplasmic. A helical membrane pass occupies residues 292-312 (AAQVALNAAFLPSIMLSGFIF). The Periplasmic segment spans residues 313 to 345 (QIDSMPAVIRAVTYIIPARYFVSTLQSLFLAGN). A helical membrane pass occupies residues 346-366 (IPVVLVVNVLFLIASAVMFIG). Residues 367–377 (LTWLKTKRRLD) lie on the Cytoplasmic side of the membrane.

The protein belongs to the ABC-2 integral membrane protein family. The complex is probably composed of two ATP-binding proteins (YbhF) and two transmembrane proteins (YbhR and YbhS).

It is found in the cell inner membrane. Part of the ABC transporter complex YbhFSR that could be involved in efflux of cefoperazone. Probably involved in the translocation of the substrate across the membrane. The protein is Probable multidrug ABC transporter permease YbhS (ybhS) of Escherichia coli O157:H7.